A 641-amino-acid polypeptide reads, in one-letter code: Threonine--tRNA ligase (641 aa).

Residues 1–61 (MPVITLPDGS…ENDTELAIVT (61 aa)) form the TGS domain. The tract at residues 242–533 (DHRKIGKKLG…LIEEYEGAFP (292 aa)) is catalytic. The Zn(2+) site is built by Cys333, His384, and His510.

It belongs to the class-II aminoacyl-tRNA synthetase family. As to quaternary structure, homodimer. The cofactor is Zn(2+).

The protein localises to the cytoplasm. The enzyme catalyses tRNA(Thr) + L-threonine + ATP = L-threonyl-tRNA(Thr) + AMP + diphosphate + H(+). In terms of biological role, catalyzes the attachment of threonine to tRNA(Thr) in a two-step reaction: L-threonine is first activated by ATP to form Thr-AMP and then transferred to the acceptor end of tRNA(Thr). Also edits incorrectly charged L-seryl-tRNA(Thr). In Marinobacter nauticus (strain ATCC 700491 / DSM 11845 / VT8) (Marinobacter aquaeolei), this protein is Threonine--tRNA ligase.